Here is a 238-residue protein sequence, read N- to C-terminus: NAD(P)H-quinone oxidoreductase subunit K 1 (238 aa).

[4Fe-4S] cluster-binding residues include Cys-54, Cys-55, Cys-119, and Cys-150.

This sequence belongs to the complex I 20 kDa subunit family. In terms of assembly, NDH-1 can be composed of about 15 different subunits; different subcomplexes with different compositions have been identified which probably have different functions. The cofactor is [4Fe-4S] cluster.

The protein localises to the cellular thylakoid membrane. The enzyme catalyses a plastoquinone + NADH + (n+1) H(+)(in) = a plastoquinol + NAD(+) + n H(+)(out). It catalyses the reaction a plastoquinone + NADPH + (n+1) H(+)(in) = a plastoquinol + NADP(+) + n H(+)(out). In terms of biological role, NDH-1 shuttles electrons from an unknown electron donor, via FMN and iron-sulfur (Fe-S) centers, to quinones in the respiratory and/or the photosynthetic chain. The immediate electron acceptor for the enzyme in this species is believed to be plastoquinone. Couples the redox reaction to proton translocation, and thus conserves the redox energy in a proton gradient. Cyanobacterial NDH-1 also plays a role in inorganic carbon-concentration. The chain is NAD(P)H-quinone oxidoreductase subunit K 1 from Cyanothece sp. (strain PCC 7425 / ATCC 29141).